Consider the following 862-residue polypeptide: Eukaryotic translation initiation factor 3 subunit C (862 aa).

Residues methionine 1–lysine 81 are disordered. Positions serine 17–glutamate 54 are enriched in acidic residues. The segment covering threonine 55 to alanine 65 has biased composition (basic and acidic residues). Positions serine 66 to glutamate 75 are enriched in acidic residues. A PCI domain is found at phenylalanine 600–glutamate 774. Residues arginine 813–alanine 862 form a disordered region. Residues glycine 818–alanine 862 show a composition bias toward gly residues.

The protein belongs to the eIF-3 subunit C family. In terms of assembly, component of the eukaryotic translation initiation factor 3 (eIF-3) complex.

It localises to the cytoplasm. Its function is as follows. Component of the eukaryotic translation initiation factor 3 (eIF-3) complex, which is involved in protein synthesis of a specialized repertoire of mRNAs and, together with other initiation factors, stimulates binding of mRNA and methionyl-tRNAi to the 40S ribosome. The eIF-3 complex specifically targets and initiates translation of a subset of mRNAs involved in cell proliferation. The polypeptide is Eukaryotic translation initiation factor 3 subunit C (nip1) (Neosartorya fischeri (strain ATCC 1020 / DSM 3700 / CBS 544.65 / FGSC A1164 / JCM 1740 / NRRL 181 / WB 181) (Aspergillus fischerianus)).